A 405-amino-acid chain; its full sequence is Acetate kinase (405 aa).

N7 serves as a coordination point for Mg(2+). Residue K14 participates in ATP binding. Substrate is bound at residue R92. The active-site Proton donor/acceptor is D149. ATP contacts are provided by residues 209 to 213 (HLGNG) and 284 to 286 (DMR). E389 provides a ligand contact to Mg(2+).

Belongs to the acetokinase family. In terms of assembly, homodimer. Mg(2+) is required as a cofactor. It depends on Mn(2+) as a cofactor.

It localises to the cytoplasm. It catalyses the reaction acetate + ATP = acetyl phosphate + ADP. It participates in metabolic intermediate biosynthesis; acetyl-CoA biosynthesis; acetyl-CoA from acetate: step 1/2. In terms of biological role, catalyzes the formation of acetyl phosphate from acetate and ATP. Can also catalyze the reverse reaction. The chain is Acetate kinase from Borreliella burgdorferi (strain ZS7) (Borrelia burgdorferi).